The primary structure comprises 158 residues: Transcriptional repressor NrdR (158 aa).

The segment at 3-34 is a zinc-finger region; it reads CPFCNSEETRVIDTRLTDDGHVVRRRRECEHC. Residues 49 to 139 enclose the ATP-cone domain; the sequence is IFVVKKGGQR…VYKEFRDLDH (91 aa).

It belongs to the NrdR family. Requires Zn(2+) as cofactor.

Negatively regulates transcription of bacterial ribonucleotide reductase nrd genes and operons by binding to NrdR-boxes. This Kosmotoga olearia (strain ATCC BAA-1733 / DSM 21960 / TBF 19.5.1) protein is Transcriptional repressor NrdR.